Consider the following 115-residue polypeptide: MSNIIKQLEQEQMKQDVPSFRPGDTVEVKVWVVEGSKKRLQAFEGVVIAIRNRGLHSAFTVRKISNGEGVERVFQTHSPVVDSISVKRRGAVRKAKLYYLRERTGKAARIKERLN.

It belongs to the bacterial ribosomal protein bL19 family.

This protein is located at the 30S-50S ribosomal subunit interface and may play a role in the structure and function of the aminoacyl-tRNA binding site. This is Large ribosomal subunit protein bL19 from Escherichia coli O139:H28 (strain E24377A / ETEC).